A 151-amino-acid polypeptide reads, in one-letter code: Deoxyuridine 5'-triphosphate nucleotidohydrolase (151 aa).

Residues 70-72 (RSG), N83, 87-89 (LID), and M97 contribute to the substrate site.

It belongs to the dUTPase family. Mg(2+) is required as a cofactor.

The catalysed reaction is dUTP + H2O = dUMP + diphosphate + H(+). The protein operates within pyrimidine metabolism; dUMP biosynthesis; dUMP from dCTP (dUTP route): step 2/2. This enzyme is involved in nucleotide metabolism: it produces dUMP, the immediate precursor of thymidine nucleotides and it decreases the intracellular concentration of dUTP so that uracil cannot be incorporated into DNA. The chain is Deoxyuridine 5'-triphosphate nucleotidohydrolase from Ectopseudomonas mendocina (strain ymp) (Pseudomonas mendocina).